A 283-amino-acid chain; its full sequence is MSRPEVVNSVAALRAQVSDWRRDGLRVAMVPTMGALHEGHLSLIRIAREKAERCVVSIFVNPTQFAPSEDLDKYPRQLARDLDLLARVKADLAFTPTVGAMYPAGFATRISVGGPSAGLESDFRPTFFEGVATVVAKLFLQATPDCAVFGEKDYQQLCVVRQLCRDLDLPVEIIGAPTIRDAHGLAMSSRNAYLDEAELAVARRLNVILHKAAAALAAGTHQDDATGEANRALIAAGFQKIDYVEARESLTLAPWRRDRAGRVLAAAWLGKTRLIDNVDVPVA.

An ATP-binding site is contributed by 33-40 (MGALHEGH). The active-site Proton donor is the H40. Q64 lines the (R)-pantoate pocket. Q64 contributes to the beta-alanine binding site. Residue 150 to 153 (GEKD) coordinates ATP. Q156 contributes to the (R)-pantoate binding site. Residues I179 and 187–190 (MSSR) contribute to the ATP site.

The protein belongs to the pantothenate synthetase family. As to quaternary structure, homodimer.

The protein resides in the cytoplasm. It catalyses the reaction (R)-pantoate + beta-alanine + ATP = (R)-pantothenate + AMP + diphosphate + H(+). It functions in the pathway cofactor biosynthesis; (R)-pantothenate biosynthesis; (R)-pantothenate from (R)-pantoate and beta-alanine: step 1/1. Its function is as follows. Catalyzes the condensation of pantoate with beta-alanine in an ATP-dependent reaction via a pantoyl-adenylate intermediate. This Mesorhizobium japonicum (strain LMG 29417 / CECT 9101 / MAFF 303099) (Mesorhizobium loti (strain MAFF 303099)) protein is Pantothenate synthetase.